The primary structure comprises 84 residues: Cytochrome b559 subunit alpha (84 aa).

The chain crosses the membrane as a helical span at residues 24 to 38 (IIHAVTLPAIFIAGF). Position 26 (His-26) interacts with heme.

The protein belongs to the PsbE/PsbF family. Heterodimer of an alpha subunit and a beta subunit. PSII is composed of 1 copy each of membrane proteins PsbA, PsbB, PsbC, PsbD, PsbE, PsbF, PsbH, PsbI, PsbJ, PsbK, PsbL, PsbM, PsbT, PsbX, PsbY, Psb30/Ycf12, peripheral proteins PsbO, CyanoQ (PsbQ), PsbU, PsbV and a large number of cofactors. It forms dimeric complexes. Heme b is required as a cofactor.

Its subcellular location is the cellular thylakoid membrane. In terms of biological role, this b-type cytochrome is tightly associated with the reaction center of photosystem II (PSII). PSII is a light-driven water:plastoquinone oxidoreductase that uses light energy to abstract electrons from H(2)O, generating O(2) and a proton gradient subsequently used for ATP formation. It consists of a core antenna complex that captures photons, and an electron transfer chain that converts photonic excitation into a charge separation. The chain is Cytochrome b559 subunit alpha from Prochlorococcus marinus (strain MIT 9301).